A 414-amino-acid chain; its full sequence is Serine-type anaerobic sulfatase-maturating enzyme (414 aa).

The Radical SAM core domain occupies 5–250 (TYAPFAKPLY…LCTIFDEWVK (246 aa)). Cys-24 and Cys-28 together coordinate [4Fe-4S] cluster. Position 30 (Tyr-30) interacts with S-adenosyl-L-methionine. Cys-31 is a [4Fe-4S] cluster binding site. Residues Gly-76, Ser-131, and Arg-143 each contribute to the S-adenosyl-L-methionine site. 3 residues coordinate [4Fe-4S] cluster: Cys-276, Cys-282, and Cys-297. Asp-298 serves as the catalytic Proton acceptor. Residues Cys-339, Cys-342, Cys-348, Cys-352, and Cys-371 each contribute to the [4Fe-4S] cluster site.

The protein belongs to the radical SAM superfamily. Anaerobic sulfatase-maturating enzyme family. [4Fe-4S] cluster serves as cofactor.

It catalyses the reaction L-seryl-[sulfatase] + S-adenosyl-L-methionine = 3-oxo-L-alanyl-[sulfatase] + 5'-deoxyadenosine + L-methionine + H(+). It participates in protein modification; sulfatase oxidation. Functionally, involved in 'Ser-type' sulfatase maturation under anaerobic conditions. Links the heparin and the chondroitin sulfate utilization pathways which contribute to the colonization of the intestinal tract. May catalyze the activation of chondro-6-sulfatase, i.e. the post-translational modification of a specific serine residue into 3-oxoalanine (also known as C(alpha)-formylglycine (FGly)), by a free radical chemical mechanism initiated via the reductive cleavage of S-adenosyl-L-methionine (SAM). Is also able to oxidize a cysteine residue in a synthetic substrate to FGly in vitro, but not in a recombinant Cys-type sulfatase in vivo. But since B.thetaiotaomicron possesses only Ser-type sulfatases, the oxidation of serine residues to FGly is the sole physiological activity. The polypeptide is Serine-type anaerobic sulfatase-maturating enzyme (chuR) (Bacteroides thetaiotaomicron (strain ATCC 29148 / DSM 2079 / JCM 5827 / CCUG 10774 / NCTC 10582 / VPI-5482 / E50)).